Here is a 237-residue protein sequence, read N- to C-terminus: Mitochondrial carrier-like protein L276 (237 aa).

Solcar repeat units lie at residues 1-83 (MAKY…FENK), 85-161 (YPYT…LNEY), and 164-233 (KPVV…LNKK). Helical transmembrane passes span 11–27 (AIAT…ICTF), 60–76 (VPAI…KYFL), 91–108 (MING…THPI), 140–160 (SFGK…TLNE), and 166–183 (VVSS…MQPL). Residues 191-196 (IYGLSL) carry the Substrate recognition motif. The chain crosses the membrane as a helical span at residues 205 to 226 (YYRGLSLNLMRIVPHFVITMTT).

The protein belongs to the mitochondrial carrier (TC 2.A.29) family.

The protein resides in the host mitochondrion inner membrane. Functionally, transports dATP and to a lesser extent dTTP, TTP, UTP and ADP, possibly across the mitochondrial inner membrane. This Acanthamoeba polyphaga (Amoeba) protein is Mitochondrial carrier-like protein L276.